Reading from the N-terminus, the 671-residue chain is Talaropentaene synthase (671 aa).

Mg(2+) is bound at residue Asp92. The DDXXD 1 motif lies at 92-96 (DDMTD). Residues 223–231 (NDLYSYEKE) carry the NSE/DTE motif. Residues Lys389, Arg392, and His421 each contribute to the isopentenyl diphosphate site. Residues Asp428 and Asp432 each contribute to the Mg(2+) site. Residues 428–432 (DDIED) carry the DDXXD 2 motif. Residue Arg437 participates in dimethylallyl diphosphate binding. Arg438 contacts isopentenyl diphosphate. The dimethylallyl diphosphate site is built by Lys515, Thr516, Gln551, Asn558, Lys568, and Lys578.

In the N-terminal section; belongs to the terpene synthase family. It in the C-terminal section; belongs to the FPP/GGPP synthase family. The cofactor is Mg(2+).

The enzyme catalyses 5 isopentenyl diphosphate + dimethylallyl diphosphate = all-trans-hexaprenyl diphosphate + 5 diphosphate. It catalyses the reaction all-trans-hexaprenyl diphosphate = talaropentaene + diphosphate. Functionally, bifunctional terpene synthase that converts dimethylallyl diphosphate (DMAPP) and isopentenyl diphosphate (IPP) into talaropentaene as a single product. The C-terminal prenyltransferase (PT) domain of MpMS catalyzes formation of hexaprenyl diphosphate (HexPP), whereas the N-terminal terpene cyclase (TC) domain catalyzes the cyclization of HexPP to talaropentaene. The chain is Talaropentaene synthase from Talaromyces verruculosus (Penicillium verruculosum).